The sequence spans 118 residues: Small ribosomal subunit protein uS13 (118 aa).

The interval 94–118 (SLPLRGQRTKTNARTRKGPRKPIRK) is disordered.

This sequence belongs to the universal ribosomal protein uS13 family. As to quaternary structure, part of the 30S ribosomal subunit. Forms a loose heterodimer with protein S19. Forms two bridges to the 50S subunit in the 70S ribosome.

Functionally, located at the top of the head of the 30S subunit, it contacts several helices of the 16S rRNA. In the 70S ribosome it contacts the 23S rRNA (bridge B1a) and protein L5 of the 50S subunit (bridge B1b), connecting the 2 subunits; these bridges are implicated in subunit movement. Contacts the tRNAs in the A and P-sites. This chain is Small ribosomal subunit protein uS13, found in Shewanella halifaxensis (strain HAW-EB4).